The sequence spans 524 residues: 2-isopropylmalate synthase (524 aa).

Residues Val-15–Thr-277 enclose the Pyruvate carboxyltransferase domain. Mn(2+)-binding residues include Asp-24, His-212, His-214, and Asn-248. The interval Arg-401 to Phe-524 is regulatory domain.

This sequence belongs to the alpha-IPM synthase/homocitrate synthase family. LeuA type 1 subfamily. As to quaternary structure, homodimer. Mn(2+) is required as a cofactor.

Its subcellular location is the cytoplasm. It carries out the reaction 3-methyl-2-oxobutanoate + acetyl-CoA + H2O = (2S)-2-isopropylmalate + CoA + H(+). The protein operates within amino-acid biosynthesis; L-leucine biosynthesis; L-leucine from 3-methyl-2-oxobutanoate: step 1/4. In terms of biological role, catalyzes the condensation of the acetyl group of acetyl-CoA with 3-methyl-2-oxobutanoate (2-ketoisovalerate) to form 3-carboxy-3-hydroxy-4-methylpentanoate (2-isopropylmalate). The sequence is that of 2-isopropylmalate synthase from Caulobacter sp. (strain K31).